We begin with the raw amino-acid sequence, 489 residues long: Endothelial zinc finger protein induced by tumor necrosis factor alpha (489 aa).

Residues 1–15 (MKELDPKNDISEDKL) show a composition bias toward basic and acidic residues. Disordered stretches follow at residues 1 to 61 (MKEL…PLGI) and 98 to 122 (EKGACPPVRRGKNFSSTSDLSKPPM). 13 consecutive C2H2-type zinc fingers follow at residues 130-152 (YDCSECGKAFSRSSSLIKHQRIH), 158-180 (FECDTCGKHFIERSSLTIHQRVH), 186-208 (YACGDCGKAFSQRMNLTVHQRTH), 214-236 (YVCDVCGKAFRKTSSLTQHERIH), 242-264 (YACGDCGKAFSQNMHLIVHQRTH), 270-292 (YVCPECGRAFSQNMHLTEHQRTH), 298-320 (YACKECGKAFNKSSSLTLHQRNH), 326-348 (YVCGECGKAFSQSSYLIQHQRFH), 354-376 (FECSECGKAFSKNSSLTQHQRIH), 382-404 (YECYICKKHFTGRSSLIVHQIVH), 410-432 (YVCGECGKAFSQSAYLIEHQRIH), 438-460 (YRCGQCGKSFIKNSSLTVHQRIH), and 466-488 (YRCGECGKTFSRNTNLTRHLRIH).

It belongs to the krueppel C2H2-type zinc-finger protein family. Highly expressed in placenta, followed by brain, testis, pancreas, heart, small intestine, muscle, uterus, prostate and peripheral blood leukocytes. Not detected in liver, lung, colon, stomach, salivary and thyroid gland.

The protein localises to the nucleus. Its function is as follows. May be involved in transcriptional regulation. The chain is Endothelial zinc finger protein induced by tumor necrosis factor alpha (ZNF71) from Homo sapiens (Human).